The chain runs to 424 residues: GTPase Obg (424 aa).

The Obg domain occupies 1 to 160; sequence MFDRVEINIK…YDLILELKLI (160 aa). The region spanning 161 to 328 is the OBG-type G domain; it reads ADVAIIGYPN…LLAKVAEKLD (168 aa). GTP contacts are provided by residues 167–174, 192–196, 213–216, 280–283, and 309–311; these read GYPNVGKS, FTTLS, EVPG, NKID, and SAL. The Mg(2+) site is built by S174 and T194. The 76-residue stretch at 349–424 folds into the OCT domain; it reads PAPKGKMGFR…IITGRMEWYL (76 aa).

The protein belongs to the TRAFAC class OBG-HflX-like GTPase superfamily. OBG GTPase family. As to quaternary structure, monomer. Requires Mg(2+) as cofactor.

The protein resides in the cytoplasm. Functionally, an essential GTPase which binds GTP, GDP and possibly (p)ppGpp with moderate affinity, with high nucleotide exchange rates and a fairly low GTP hydrolysis rate. Plays a role in control of the cell cycle, stress response, ribosome biogenesis and in those bacteria that undergo differentiation, in morphogenesis control. In Dehalococcoides mccartyi (strain ATCC BAA-2100 / JCM 16839 / KCTC 5957 / BAV1), this protein is GTPase Obg.